We begin with the raw amino-acid sequence, 266 residues long: UPF0354 protein LMHCC_0955 (266 aa).

It belongs to the UPF0354 family.

The sequence is that of UPF0354 protein LMHCC_0955 from Listeria monocytogenes serotype 4a (strain HCC23).